Reading from the N-terminus, the 284-residue chain is Ubiquinone biosynthesis protein COQ4, mitochondrial (284 aa).

Residues His-165, Asp-166, His-169, and Glu-181 each contribute to the Zn(2+) site.

The protein belongs to the COQ4 family. In terms of assembly, component of a multi-subunit COQ enzyme complex, composed of at least COQ3, COQ4, COQ5, COQ6, COQ7 and COQ9. It depends on Zn(2+) as a cofactor.

It localises to the mitochondrion inner membrane. The catalysed reaction is a 4-hydroxy-3-methoxy-5-(all-trans-polyprenyl)benzoate + H(+) = a 2-methoxy-6-(all-trans-polyprenyl)phenol + CO2. The protein operates within cofactor biosynthesis; ubiquinone biosynthesis. Lyase that catalyzes the C1-decarboxylation of 4-hydroxy-3-methoxy-5-(all-trans-polyprenyl)benzoic acid into 2-methoxy-6-(all-trans-polyprenyl)phenol during ubiquinone biosynthesis. The sequence is that of Ubiquinone biosynthesis protein COQ4, mitochondrial from Blastomyces gilchristii (strain SLH14081) (Blastomyces dermatitidis).